Reading from the N-terminus, the 245-residue chain is Inner membrane protein YgaZ (245 aa).

Residues 1-24 lie on the Cytoplasmic side of the membrane; the sequence is MESPTPQPAPGSATFMEGCKDSLP. A helical transmembrane segment spans residues 25-45; sequence IVISYIPVAFAFGLNATRLGF. Residues 46–63 lie on the Periplasmic side of the membrane; sequence SPLESVFFSCIIYAGASQ. Residues 64 to 84 form a helical membrane-spanning segment; the sequence is FVITAMLAAGSSLWIAALTVM. Topologically, residues 85 to 109 are cytoplasmic; the sequence is AMDVRHVLYGPSLRSRIIQRLQKSK. A helical membrane pass occupies residues 110 to 130; that stretch reads TALWAFGLTDEVFAAATAKLV. The Periplasmic segment spans residues 131-140; that stretch reads RNNRRWSENW. Residues 141–161 traverse the membrane as a helical segment; sequence MIGIAFSSWSSWVFGTVIGAF. The Cytoplasmic segment spans residues 162-172; that stretch reads SGSGLLQGYPA. A helical membrane pass occupies residues 173–193; that stretch reads VEAALGFMLPALFMSFLLASF. The Periplasmic portion of the chain corresponds to 194–205; that stretch reads QRKQSLCVTAAL. A helical transmembrane segment spans residues 206–226; that stretch reads VGALAGVTLFSIPVAILAGIV. The Cytoplasmic portion of the chain corresponds to 227–245; sequence CGCLTALIQAFWQGAPDEL.

This sequence belongs to the AzlC family.

The protein localises to the cell inner membrane. The sequence is that of Inner membrane protein YgaZ (ygaZ) from Escherichia coli (strain K12).